Reading from the N-terminus, the 132-residue chain is Interleukin-4 (132 aa).

The N-terminal stretch at 1-24 is a signal peptide; that stretch reads MGLTSQLIPTLVCLLALTSTFVHG. N-linked (GlcNAc...) asparagine glycans are attached at residues asparagine 28, asparagine 45, asparagine 62, asparagine 83, asparagine 95, and asparagine 101. 2 cysteine pairs are disulfide-bonded: cysteine 48/cysteine 84 and cysteine 70/cysteine 104.

It belongs to the IL-4/IL-13 family.

It localises to the secreted. Functionally, participates in at least several B-cell activation processes as well as of other cell types. It is a costimulator of DNA-synthesis. It induces the expression of class II MHC molecules on resting B-cells. It enhances both secretion and cell surface expression of IgE and IgG1. It also regulates the expression of the low affinity Fc receptor for IgE (CD23) on both lymphocytes and monocytes. Positively regulates IL31RA expression in macrophages. Stimulates autophagy in dendritic cells by interfering with mTORC1 signaling and through the induction of RUFY4. In Canis lupus familiaris (Dog), this protein is Interleukin-4 (IL4).